Consider the following 287-residue polypeptide: Ribosomal RNA small subunit methyltransferase A (287 aa).

6 residues coordinate S-adenosyl-L-methionine: Asn28, Leu30, Gly55, Glu77, Asp103, and Asn123.

The protein belongs to the class I-like SAM-binding methyltransferase superfamily. rRNA adenine N(6)-methyltransferase family. RsmA subfamily.

The protein resides in the cytoplasm. The enzyme catalyses adenosine(1518)/adenosine(1519) in 16S rRNA + 4 S-adenosyl-L-methionine = N(6)-dimethyladenosine(1518)/N(6)-dimethyladenosine(1519) in 16S rRNA + 4 S-adenosyl-L-homocysteine + 4 H(+). Functionally, specifically dimethylates two adjacent adenosines (A1518 and A1519) in the loop of a conserved hairpin near the 3'-end of 16S rRNA in the 30S particle. May play a critical role in biogenesis of 30S subunits. The chain is Ribosomal RNA small subunit methyltransferase A from Rhodopseudomonas palustris (strain BisA53).